Consider the following 342-residue polypeptide: N-acetyl-gamma-glutamyl-phosphate reductase (342 aa).

Residue Cys-147 is part of the active site.

It belongs to the NAGSA dehydrogenase family. Type 1 subfamily.

It is found in the cytoplasm. The enzyme catalyses N-acetyl-L-glutamate 5-semialdehyde + phosphate + NADP(+) = N-acetyl-L-glutamyl 5-phosphate + NADPH + H(+). It functions in the pathway amino-acid biosynthesis; L-arginine biosynthesis; N(2)-acetyl-L-ornithine from L-glutamate: step 3/4. Functionally, catalyzes the NADPH-dependent reduction of N-acetyl-5-glutamyl phosphate to yield N-acetyl-L-glutamate 5-semialdehyde. This Campylobacter jejuni subsp. jejuni serotype O:2 (strain ATCC 700819 / NCTC 11168) protein is N-acetyl-gamma-glutamyl-phosphate reductase.